A 97-amino-acid polypeptide reads, in one-letter code: Large ribosomal subunit protein bL28 (97 aa).

Belongs to the bacterial ribosomal protein bL28 family.

The chain is Large ribosomal subunit protein bL28 from Bartonella henselae (strain ATCC 49882 / DSM 28221 / CCUG 30454 / Houston 1) (Rochalimaea henselae).